The primary structure comprises 43 residues: Hemolysin H3C (43 aa).

An N-formylmethionine modification is found at Met-1.

It belongs to the staphylococcal hemolytic protein family.

Its subcellular location is the secreted. Virulence factor. Causes hemolysis of erythrocytes from sheep (HD(50)=2.63 mM), rabbit (HD(50)=2.37 mM), guinea pig (HD(50)=1.98 mM), dog (HD(50)=1.02 mM) and human (HD(50)=2.07 mM). Acts synergistically with beta-hemolysins from S.aureus ATCC 25923. Cytotoxic towards human dermal fibroblasts. The sequence is that of Hemolysin H3C from Staphylococcus cohnii subsp. cohnii.